Here is a 137-residue protein sequence, read N- to C-terminus: Small ribosomal subunit protein bS16m (137 aa).

Residues 1-34 (MVHLTTLLCKAYRGGHLTIRLALGGCTNRPFYRI) constitute a mitochondrion transit peptide. A Phosphothreonine modification is found at T130.

The protein belongs to the bacterial ribosomal protein bS16 family. In terms of assembly, component of the mitochondrial small ribosomal subunit (mt-SSU). Mature mammalian 55S mitochondrial ribosomes consist of a small (28S) and a large (39S) subunit. The 28S small subunit contains a 12S ribosomal RNA (12S mt-rRNA) and 30 different proteins. The 39S large subunit contains a 16S rRNA (16S mt-rRNA), a copy of mitochondrial valine transfer RNA (mt-tRNA(Val)), which plays an integral structural role, and 52 different proteins. bS16m has a zinc binding site.

Its subcellular location is the mitochondrion. The polypeptide is Small ribosomal subunit protein bS16m (MRPS16) (Homo sapiens (Human)).